Consider the following 125-residue polypeptide: Secreted RxLR effector protein 55 (125 aa).

A signal peptide spans 1–21; it reads MAASRSSITTLLLLIVAVALG. A RxLR motif is present at residues 35–38; sequence RQLR. A compositionally biased stretch (low complexity) spans 51 to 87; it reads ESATSSSSSSALDHKSSAPGEATNASETEHSAASTAS. A disordered region spans residues 51–96; the sequence is ESATSSSSSSALDHKSSAPGEATNASETEHSAASTASEPKHEGPTM. Residue Asn74 is glycosylated (N-linked (GlcNAc...) asparagine). The chain crosses the membrane as a helical span at residues 99 to 119; the sequence is FVGPAAAGVLAILLIGAVIAF.

This sequence belongs to the RxLR effector family.

Its subcellular location is the secreted. The protein resides in the host cell membrane. Its function is as follows. Effector that acts as a broad suppressor of cell death to interrupt plant immunity. Inhibits cell death induced by cell death-inducing proteins, including the PAMP elicitor INF1 from P.infestans. The protein is Secreted RxLR effector protein 55 of Plasmopara viticola (Downy mildew of grapevine).